Consider the following 504-residue polypeptide: Tyrosine-protein phosphatase non-receptor type substrate 1 (504 aa).

Residues 1–30 (MEPAGPAPGRLGPLLCLLLAASCAWSGVAG) form the signal peptide. The Extracellular segment spans residues 31 to 373 (EEELQVIQPD…NTGSNERNIY (343 aa)). An Ig-like V-type domain is found at 32-137 (EELQVIQPDK…SPDDVEFKSG (106 aa)). Disulfide bonds link Cys-55/Cys-121 and Cys-170/Cys-228. 2 consecutive Ig-like C1-type domains span residues 148-247 (PSAP…ANLS) and 254-348 (PTLE…HDLK). N-linked (GlcNAc...) asparagine glycosylation is found at Asn-245, Asn-270, Asn-292, and Asn-319. A disulfide bond links Cys-273 and Cys-331. The span at 336–355 (DGQPAVSKSHDLKVSAHPKE) shows a compositional bias: basic and acidic residues. Positions 336–364 (DGQPAVSKSHDLKVSAHPKEQGSNTAAEN) are disordered. A helical membrane pass occupies residues 374 to 394 (IVVGVVCTLLVALLMAALYLV). Residues 395 to 504 (RIRQKKAQGS…EYASVQVPRK (110 aa)) lie on the Cytoplasmic side of the membrane. A disordered region spans residues 402–504 (QGSTSSTRLH…EYASVQVPRK (103 aa)). Basic and acidic residues predominate over residues 409–421 (RLHEPEKNAREIT). At Tyr-429 the chain carries Phosphotyrosine; by Tyr-kinases. The SH2-binding motif lies at 429–432 (YADL). The SH3-binding signature appears at 439-444 (KPAPQA). A compositionally biased stretch (polar residues) spans 446 to 467 (EPNNHTEYASIQTSPQPASEDT). A phosphotyrosine; by Tyr-kinases mark is found at Tyr-453 and Tyr-470. 3 short sequence motifs (SH2-binding) span residues 453 to 456 (YASI), 470 to 473 (YADL), and 496 to 499 (YASV). Tyr-496 is subject to Phosphotyrosine.

As to quaternary structure, binds PTPN11 when tyrosine-phosphorylated, except in macrophages, where it primarily binds PTPN6. Binds GRB2 in vitro. Binds FGR. Binds JAK2 irrespective of its phosphorylation status and forms a stable complex. Binds SCAP1 and/or SCAP2. The resulting complex recruits FYB1. Binds PTK2B. Interacts with TRIM2. Post-translationally, N-glycosylated. In terms of processing, phosphorylated on tyrosine residues in response to stimulation with EGF, growth hormone, insulin and PDGF. Dephosphorylated by PTPN11. As to expression, ubiquitous. Highly expressed in brain. Detected on myeloid cells, but not T-cells. Detected at lower levels in heart, placenta, lung, testis, ovary, colon, liver, small intestine, prostate, spleen, kidney, skeletal muscle and pancreas.

It localises to the membrane. Immunoglobulin-like cell surface receptor for CD47. Acts as docking protein and induces translocation of PTPN6, PTPN11 and other binding partners from the cytosol to the plasma membrane. Supports adhesion of cerebellar neurons, neurite outgrowth and glial cell attachment. May play a key role in intracellular signaling during synaptogenesis and in synaptic function. Involved in the negative regulation of receptor tyrosine kinase-coupled cellular responses induced by cell adhesion, growth factors or insulin. Mediates negative regulation of phagocytosis, mast cell activation and dendritic cell activation. CD47 binding prevents maturation of immature dendritic cells and inhibits cytokine production by mature dendritic cells. Plays a role in antiviral immunity and limits new world arenavirus infection by decreasing virus internalization. Receptor for THBS1. Interaction with THBS1 stimulates phosphorylation of SIRPA. In response to THBS1, involved in ROS signaling in non-phagocytic cells, stimulating NADPH oxidase-derived ROS production. The polypeptide is Tyrosine-protein phosphatase non-receptor type substrate 1 (SIRPA) (Homo sapiens (Human)).